The chain runs to 376 residues: Acetylornithine aminotransferase (376 aa).

Pyridoxal 5'-phosphate is bound by residues 96–97 (GT) and phenylalanine 128. Arginine 131 serves as a coordination point for N(2)-acetyl-L-ornithine. Residue 213–216 (DEVQ) coordinates pyridoxal 5'-phosphate. Position 242 is an N6-(pyridoxal phosphate)lysine (lysine 242). Serine 270 lines the N(2)-acetyl-L-ornithine pocket. Threonine 271 contributes to the pyridoxal 5'-phosphate binding site.

Belongs to the class-III pyridoxal-phosphate-dependent aminotransferase family. ArgD subfamily. Homodimer. Requires pyridoxal 5'-phosphate as cofactor.

The protein localises to the cytoplasm. It catalyses the reaction N(2)-acetyl-L-ornithine + 2-oxoglutarate = N-acetyl-L-glutamate 5-semialdehyde + L-glutamate. It functions in the pathway amino-acid biosynthesis; L-arginine biosynthesis; N(2)-acetyl-L-ornithine from L-glutamate: step 4/4. This is Acetylornithine aminotransferase from Aquifex aeolicus (strain VF5).